The chain runs to 212 residues: Redox-sensing transcriptional repressor Rex (212 aa).

A DNA-binding region (H-T-H motif) is located at residues 17 to 56; the sequence is LYARSLRYLLEEGIHSVSSQELGERINVTAAQIRKDLSYF. 91–96 provides a ligand contact to NAD(+); that stretch reads GIGLLG.

This sequence belongs to the transcriptional regulatory Rex family. Homodimer.

It is found in the cytoplasm. In terms of biological role, modulates transcription in response to changes in cellular NADH/NAD(+) redox state. The chain is Redox-sensing transcriptional repressor Rex from Chloroflexus aggregans (strain MD-66 / DSM 9485).